A 441-amino-acid chain; its full sequence is Ribosomal protein uS12 methylthiotransferase RimO (441 aa).

Positions 8–118 constitute an MTTase N-terminal domain; the sequence is PKIGFVSLGC…VLEHVHHYVP (111 aa). 6 residues coordinate [4Fe-4S] cluster: Cys-17, Cys-53, Cys-82, Cys-150, Cys-154, and Cys-157. Positions 136 to 373 constitute a Radical SAM core domain; the sequence is LTPRHYAYLK…MQLQQQISAE (238 aa). The TRAM domain maps to 376-441; that stretch reads QEKVGREILV…DEYDLWGSRV (66 aa).

The protein belongs to the methylthiotransferase family. RimO subfamily. It depends on [4Fe-4S] cluster as a cofactor.

The protein localises to the cytoplasm. The enzyme catalyses L-aspartate(89)-[ribosomal protein uS12]-hydrogen + (sulfur carrier)-SH + AH2 + 2 S-adenosyl-L-methionine = 3-methylsulfanyl-L-aspartate(89)-[ribosomal protein uS12]-hydrogen + (sulfur carrier)-H + 5'-deoxyadenosine + L-methionine + A + S-adenosyl-L-homocysteine + 2 H(+). Functionally, catalyzes the methylthiolation of an aspartic acid residue of ribosomal protein uS12. The polypeptide is Ribosomal protein uS12 methylthiotransferase RimO (Shigella flexneri).